A 144-amino-acid polypeptide reads, in one-letter code: Endoribonuclease YbeY (144 aa).

Positions 104, 108, and 114 each coordinate Zn(2+).

This sequence belongs to the endoribonuclease YbeY family. Zn(2+) serves as cofactor.

Its subcellular location is the cytoplasm. In terms of biological role, single strand-specific metallo-endoribonuclease involved in late-stage 70S ribosome quality control and in maturation of the 3' terminus of the 16S rRNA. This chain is Endoribonuclease YbeY, found in Nitratiruptor sp. (strain SB155-2).